The following is a 235-amino-acid chain: Ubiquinone/menaquinone biosynthesis C-methyltransferase UbiE (235 aa).

S-adenosyl-L-methionine-binding residues include threonine 59, aspartate 84, and serine 123.

Belongs to the class I-like SAM-binding methyltransferase superfamily. MenG/UbiE family.

The catalysed reaction is a 2-demethylmenaquinol + S-adenosyl-L-methionine = a menaquinol + S-adenosyl-L-homocysteine + H(+). It catalyses the reaction a 2-methoxy-6-(all-trans-polyprenyl)benzene-1,4-diol + S-adenosyl-L-methionine = a 5-methoxy-2-methyl-3-(all-trans-polyprenyl)benzene-1,4-diol + S-adenosyl-L-homocysteine + H(+). The protein operates within quinol/quinone metabolism; menaquinone biosynthesis; menaquinol from 1,4-dihydroxy-2-naphthoate: step 2/2. Its pathway is cofactor biosynthesis; ubiquinone biosynthesis. In terms of biological role, methyltransferase required for the conversion of demethylmenaquinol (DMKH2) to menaquinol (MKH2) and the conversion of 2-polyprenyl-6-methoxy-1,4-benzoquinol (DDMQH2) to 2-polyprenyl-3-methyl-6-methoxy-1,4-benzoquinol (DMQH2). The chain is Ubiquinone/menaquinone biosynthesis C-methyltransferase UbiE from Campylobacter jejuni subsp. jejuni serotype O:6 (strain 81116 / NCTC 11828).